A 670-amino-acid polypeptide reads, in one-letter code: Probable membrane-anchored ferredoxin csal_0991 (670 aa).

The next 5 helical transmembrane spans lie at L2–V22, V68–A90, L94–A113, L135–A155, and G159–F179. 4Fe-4S ferredoxin-type domains lie at W241–P271 and G316–A347. [4Fe-4S] cluster-binding residues include C250, C253, C256, C260, C328, C331, C334, and C338. The segment at N648–S670 is disordered. Over residues T659–S670 the composition is skewed to polar residues.

The cofactor is [4Fe-4S] cluster.

Its subcellular location is the cell inner membrane. Its function is as follows. Participates in the electron transfer process during N,N-dimethylglycine (DMG) degradation to sarcosine. Probably transfers the electrons from N,N-dimethylglycine/sarcosine dehydrogenase (DMGDH) to the electron transfer flavoprotein (ETF) EtfA-EtfB. The protein is Probable membrane-anchored ferredoxin csal_0991 of Chromohalobacter salexigens (strain ATCC BAA-138 / DSM 3043 / CIP 106854 / NCIMB 13768 / 1H11).